A 563-amino-acid polypeptide reads, in one-letter code: MSETINTAAQFPSFEKPTVQFNERGWGPCELPDTFKDVPYQPFSKNDRLGKICDWTSTSNNDKKYQNKYASSFGTGNQYSYYHEEDETTFHLVDTARVQKPPHQRGRFRNMRGRGGRGRNPRGGLNNHHHHGMTTLNGKNVKARDTRRGMGKKFGHRGPPPKMRESSVAVRADWASIEEMDFPRLIKLSLPNIKDGVDIATCGTLEYYDKTYDRINVKNEKPLQKIDRIVHTVTTTDDPVIRRLSKTVGNVFATDAILATIMCSTRSNYSWDIVIEKVGDKIFMDKRDHTEFDLLTVNESSVEPPTDDDSSCNSPRNLAIEATFINHNFSQQVLKTGDQEAKFKFEEPNPFISEDEDIQVASVGYRYKKWELGSDIVLVARCEHDGVLQTPSGEPQFMSIKALNEWDSKLANGVEWRQKLDTQRGAVLANELRNNACKLAKWTVQAVLAGSDQLKLGYVSRINPRDHSRHVILGTQQFKPHEFATQINLSMDNAWGVLRCIIDLVMKQKDGKYLIMKDPNKPIIRLYDIPDNTFDSDDSDDGEGDDGEGFQQVYNYANNSNKI.

Residues 98-136 (VQKPPHQRGRFRNMRGRGGRGRNPRGGLNNHHHHGMTTL) are disordered. Residues 100–120 (KPPHQRGRFRNMRGRGGRGRN) show a composition bias toward basic residues. Residues 291-305 (EFDLLTVNESSVEPP) are RNA gate.

This sequence belongs to the eIF-3 subunit D family. As to quaternary structure, component of the eukaryotic translation initiation factor 3 (eIF-3) complex. The eIF-3 complex interacts with pix.

Its subcellular location is the cytoplasm. Its function is as follows. mRNA cap-binding component of the eukaryotic translation initiation factor 3 (eIF-3) complex, which is involved in protein synthesis of a specialized repertoire of mRNAs and, together with other initiation factors, stimulates binding of mRNA and methionyl-tRNAi to the 40S ribosome. The eIF-3 complex specifically targets and initiates translation of a subset of mRNAs involved in cell proliferation. In the eIF-3 complex, eif3d specifically recognizes and binds the 7-methylguanosine cap of a subset of mRNAs. In Drosophila pseudoobscura pseudoobscura (Fruit fly), this protein is Eukaryotic translation initiation factor 3 subunit D-1.